The sequence spans 906 residues: Protein kintoun (906 aa).

S376 bears the Phosphoserine mark. 2 disordered regions span residues 614-691 (QQQK…RKQR) and 793-906 (RKKN…DEDM). Residues 618–631 (KLNKKQRKRNKKQR) are compositionally biased toward basic residues. The span at 639 to 655 (EELKAAQEELQLQHEKQ) shows a compositional bias: basic and acidic residues. Over residues 793–808 (RKKNQKRRDCKLRAQQ) the composition is skewed to basic residues. Residue S812 is modified to Phosphoserine. The segment covering 837–850 (ANAQYFKQPNNNNG) has biased composition (polar residues). Composition is skewed to basic and acidic residues over residues 851-865 (HDQD…HDSG) and 875-887 (NNEE…EADA). Acidic residues predominate over residues 894–906 (EMDDDDEDEDEDM).

Belongs to the PIH1 family. Kintoun subfamily. In terms of assembly, interacts with Pp1alpha-96A, Pp1-87B, Pp1-13C and flw.

The protein localises to the cytoplasm. Its function is as follows. Required for cytoplasmic pre-assembly of axonemal dyneins, thereby playing a central role in motility in cilia and flagella. Involved in pre-assembly of dynein arm complexes in the cytoplasm before intraflagellar transport loads them for the ciliary compartment. In Drosophila virilis (Fruit fly), this protein is Protein kintoun.